The chain runs to 945 residues: Bifunctional glutamine synthetase adenylyltransferase/adenylyl-removing enzyme (945 aa).

The interval 1-441 (MLPLSAALQT…VFNDLIGDDS (441 aa)) is adenylyl removase. Positions 450–945 (YQHYHSLWQD…VRASWAKWLG (496 aa)) are adenylyl transferase.

The protein belongs to the GlnE family. It depends on Mg(2+) as a cofactor.

It catalyses the reaction [glutamine synthetase]-O(4)-(5'-adenylyl)-L-tyrosine + phosphate = [glutamine synthetase]-L-tyrosine + ADP. It carries out the reaction [glutamine synthetase]-L-tyrosine + ATP = [glutamine synthetase]-O(4)-(5'-adenylyl)-L-tyrosine + diphosphate. In terms of biological role, involved in the regulation of glutamine synthetase GlnA, a key enzyme in the process to assimilate ammonia. When cellular nitrogen levels are high, the C-terminal adenylyl transferase (AT) inactivates GlnA by covalent transfer of an adenylyl group from ATP to specific tyrosine residue of GlnA, thus reducing its activity. Conversely, when nitrogen levels are low, the N-terminal adenylyl removase (AR) activates GlnA by removing the adenylyl group by phosphorolysis, increasing its activity. The regulatory region of GlnE binds the signal transduction protein PII (GlnB) which indicates the nitrogen status of the cell. This Serratia proteamaculans (strain 568) protein is Bifunctional glutamine synthetase adenylyltransferase/adenylyl-removing enzyme.